The primary structure comprises 411 residues: Phosphopentomutase (411 aa).

Residues D14, D306, H311, D347, H348, and H359 each coordinate Mn(2+).

The protein belongs to the phosphopentomutase family. Mn(2+) is required as a cofactor.

It is found in the cytoplasm. The enzyme catalyses 2-deoxy-alpha-D-ribose 1-phosphate = 2-deoxy-D-ribose 5-phosphate. The catalysed reaction is alpha-D-ribose 1-phosphate = D-ribose 5-phosphate. Its pathway is carbohydrate degradation; 2-deoxy-D-ribose 1-phosphate degradation; D-glyceraldehyde 3-phosphate and acetaldehyde from 2-deoxy-alpha-D-ribose 1-phosphate: step 1/2. In terms of biological role, isomerase that catalyzes the conversion of deoxy-ribose 1-phosphate (dRib-1-P) and ribose 1-phosphate (Rib-1-P) to deoxy-ribose 5-phosphate (dRib-5-P) and ribose 5-phosphate (Rib-5-P), respectively. This is Phosphopentomutase from Lactococcus lactis subsp. cremoris (strain MG1363).